The following is a 694-amino-acid chain: ATP-dependent RNA helicase DHX33 (694 aa).

The 169-residue stretch at 78–246 (LKELEANDTV…FNCKGMYLEG (169 aa)) folds into the Helicase ATP-binding domain. 91–98 (SETGSGKT) contacts ATP. The DEAH box signature appears at 188 to 191 (DEAH). The Helicase C-terminal domain occupies 270 to 443 (TLFHIHRTTP…SMVLQLLALD (174 aa)).

Belongs to the DEAD box helicase family. DEAH subfamily.

It is found in the nucleus. It localises to the nucleolus. It carries out the reaction ATP + H2O = ADP + phosphate + H(+). Its function is as follows. Part of a translational control module, also containing pths/DDX47 and ais/DDX52, which coordinates germline stem cell differentiation with ribosome biogenesis during oogenesis. This module allows for coregulation of ribosomal proteins and non1/GTPBP4, a p53 repressor, preventing p53 stabilization, cell cycle arrest and loss of stem cell differentiation. The protein is ATP-dependent RNA helicase DHX33 of Drosophila melanogaster (Fruit fly).